A 644-amino-acid polypeptide reads, in one-letter code: MFQDNPLLAQLKQQLHSQTPRAEGVVKATEKGFGFLEVDAQKSYFIPPPQMKKVMHGDRIVAVIHTEKERESAEPEELIEPFLTRFVGKVQGKNDRLSIVPDHPLLKDAIPCRAARGVQHEFKEGDWAVAEMRRHPLKGDRSFYADLTQYITFADDHFVPWWVTLARHNLEKEAPNGVATEMLDEGLERQDLTALNFVTIDSASTEDMDDALYAEELADGRLQLTVAIADPTAWIAEGSKLDNAAKIRAFTNYLPGFNIPMLPRELSDDLCSLRANEVRPALACRMIIAADGTIDDDIAFFAATIESKAKLVYDNVSDWLENNSTWQPENEGIAQQIRLLHRICLSRSEWRHHHALVFKDRPDYRFVLGEKGEVLDIVAEPRRIANRIVEESMIAANLCAARVLRDKLGFGIYNVHTGFDPANADALAALLKTHGLHVDAEEVLTLEGFCKLRRELDAQPSGFLDSRIRRFQSFAEISTEPGPHFGLGLEAYATWTSPIRKYGDMINHRLLKAVIKGEAIARPQEDITQQMAERRRLNRMAERDVGDWLYARFLNDKAGTNTRFAAEIIDVSRGGMRVRLVDNGAIAFIPAPFLHAVRDELVCSQENGTVQIKGETVYKVTDVIDVTIAEVRMETRSIIARPAA.

In terms of domain architecture, RNB spans 189-516 (RQDLTALNFV…NHRLLKAVIK (328 aa)). Positions 561 to 643 (NTRFAAEIID…ETRSIIARPA (83 aa)) constitute an S1 motif domain.

Belongs to the RNR ribonuclease family. RNase II subfamily.

It is found in the cytoplasm. It carries out the reaction Exonucleolytic cleavage in the 3'- to 5'-direction to yield nucleoside 5'-phosphates.. Functionally, involved in mRNA degradation. Hydrolyzes single-stranded polyribonucleotides processively in the 3' to 5' direction. The sequence is that of Exoribonuclease 2 from Salmonella typhi.